A 321-amino-acid chain; its full sequence is UDP-N-acetylenolpyruvoylglucosamine reductase (321 aa).

The FAD-binding PCMH-type domain occupies 39–205 (RTGGLAELFY…TAALLEGEPG (167 aa)). The active site involves R185. The Proton donor role is filled by S234. E304 is a catalytic residue.

The protein belongs to the MurB family. The cofactor is FAD.

It localises to the cytoplasm. It carries out the reaction UDP-N-acetyl-alpha-D-muramate + NADP(+) = UDP-N-acetyl-3-O-(1-carboxyvinyl)-alpha-D-glucosamine + NADPH + H(+). Its pathway is cell wall biogenesis; peptidoglycan biosynthesis. In terms of biological role, cell wall formation. The sequence is that of UDP-N-acetylenolpyruvoylglucosamine reductase from Bartonella quintana (strain Toulouse) (Rochalimaea quintana).